Here is a 482-residue protein sequence, read N- to C-terminus: Bifunctional protein GlmU (482 aa).

The interval 1 to 241 is pyrophosphorylase; it reads MTASTEAAVV…SALVTGVNDR (241 aa). Residues 12-15, Lys-26, Gln-83, 88-89, 112-114, Gly-151, Glu-166, Asn-181, and Asn-239 each bind UDP-N-acetyl-alpha-D-glucosamine; these read LAAG, GT, and SGD. Residue Asp-114 coordinates Mg(2+). Asn-239 serves as a coordination point for Mg(2+). Residues 242-262 are linker; it reads VQLSDLGKVLNRRIVAAHQRA. The tract at residues 263 to 482 is N-acetyltransferase; the sequence is GVTIIDPGST…AARKALGDES (220 aa). Residues Arg-344 and Lys-362 each contribute to the UDP-N-acetyl-alpha-D-glucosamine site. His-374 (proton acceptor) is an active-site residue. 2 residues coordinate UDP-N-acetyl-alpha-D-glucosamine: Tyr-377 and Asn-388. Acetyl-CoA-binding positions include Ala-391, 397-398, Ser-416, and Ala-434; that span reads NY. The interval 463 to 482 is disordered; it reads KKRPGSAADKAARKALGDES. Residues 472-482 show a composition bias toward basic and acidic residues; that stretch reads KAARKALGDES.

In the N-terminal section; belongs to the N-acetylglucosamine-1-phosphate uridyltransferase family. This sequence in the C-terminal section; belongs to the transferase hexapeptide repeat family. Homotrimer. Requires Mg(2+) as cofactor.

It localises to the cytoplasm. It carries out the reaction alpha-D-glucosamine 1-phosphate + acetyl-CoA = N-acetyl-alpha-D-glucosamine 1-phosphate + CoA + H(+). The enzyme catalyses N-acetyl-alpha-D-glucosamine 1-phosphate + UTP + H(+) = UDP-N-acetyl-alpha-D-glucosamine + diphosphate. It participates in nucleotide-sugar biosynthesis; UDP-N-acetyl-alpha-D-glucosamine biosynthesis; N-acetyl-alpha-D-glucosamine 1-phosphate from alpha-D-glucosamine 6-phosphate (route II): step 2/2. It functions in the pathway nucleotide-sugar biosynthesis; UDP-N-acetyl-alpha-D-glucosamine biosynthesis; UDP-N-acetyl-alpha-D-glucosamine from N-acetyl-alpha-D-glucosamine 1-phosphate: step 1/1. Its pathway is bacterial outer membrane biogenesis; LPS lipid A biosynthesis. In terms of biological role, catalyzes the last two sequential reactions in the de novo biosynthetic pathway for UDP-N-acetylglucosamine (UDP-GlcNAc). The C-terminal domain catalyzes the transfer of acetyl group from acetyl coenzyme A to glucosamine-1-phosphate (GlcN-1-P) to produce N-acetylglucosamine-1-phosphate (GlcNAc-1-P), which is converted into UDP-GlcNAc by the transfer of uridine 5-monophosphate (from uridine 5-triphosphate), a reaction catalyzed by the N-terminal domain. The chain is Bifunctional protein GlmU from Mycolicibacterium smegmatis (strain ATCC 700084 / mc(2)155) (Mycobacterium smegmatis).